Here is a 449-residue protein sequence, read N- to C-terminus: Hyaluronidase-2 (449 aa).

The first 23 residues, 1 to 23 (MYHLWIKCLAAWIFLKRCNGVHA), serve as a signal peptide directing secretion. 2 disulfides stabilise this stretch: cysteine 47-cysteine 340 and cysteine 211-cysteine 227. N-linked (GlcNAc...) asparagine glycans are attached at residues asparagine 67, asparagine 103, and asparagine 111. The active-site Proton donor is glutamate 135. Residue asparagine 153 is glycosylated (N-linked (GlcNAc...) asparagine). The N-linked (GlcNAc...) asparagine glycan is linked to asparagine 357. 3 cysteine pairs are disulfide-bonded: cysteine 365-cysteine 376, cysteine 370-cysteine 427, and cysteine 429-cysteine 438. An N-linked (GlcNAc...) asparagine glycan is attached at asparagine 401. Residues 427–438 (CQCYQGWKGLYC) form the EGF-like domain.

Belongs to the glycosyl hydrolase 56 family. Monomer. As to expression, expressed by the venom gland.

It is found in the secreted. It carries out the reaction Random hydrolysis of (1-&gt;4)-linkages between N-acetyl-beta-D-glucosamine and D-glucuronate residues in hyaluronate.. Its function is as follows. Snake venom endo-hyaluronidase that degrades hyaluronan to smaller oligosaccharide fragments. In venom, it is not toxic by itself, but increases the diffusion of other venom proteins by degrading the extracellular matrix. In addition, it displays antiedematogenic activity. In Bitis arietans (African puff adder), this protein is Hyaluronidase-2.